Reading from the N-terminus, the 100-residue chain is Large ribosomal subunit protein bL27 (100 aa).

Residues 1-9 (MLKMNLQLF) constitute a propeptide that is removed on maturation.

The protein belongs to the bacterial ribosomal protein bL27 family. In terms of processing, the N-terminus is cleaved by ribosomal processing cysteine protease Prp.

The sequence is that of Large ribosomal subunit protein bL27 from Clostridium perfringens (strain ATCC 13124 / DSM 756 / JCM 1290 / NCIMB 6125 / NCTC 8237 / Type A).